Reading from the N-terminus, the 209-residue chain is Large ribosomal subunit protein uL3 (209 aa).

It belongs to the universal ribosomal protein uL3 family. Part of the 50S ribosomal subunit. Forms a cluster with proteins L14 and L19.

In terms of biological role, one of the primary rRNA binding proteins, it binds directly near the 3'-end of the 23S rRNA, where it nucleates assembly of the 50S subunit. The chain is Large ribosomal subunit protein uL3 from Nitratidesulfovibrio vulgaris (strain ATCC 29579 / DSM 644 / CCUG 34227 / NCIMB 8303 / VKM B-1760 / Hildenborough) (Desulfovibrio vulgaris).